Reading from the N-terminus, the 91-residue chain is uncharacterized protein (91 aa).

The 91-residue stretch at 1-91 folds into the Integrase catalytic domain; sequence MLTFWHWKWL…YQNILRENGI (91 aa).

This is an uncharacterized protein from Haemophilus influenzae (strain ATCC 51907 / DSM 11121 / KW20 / Rd).